The following is a 372-amino-acid chain: Germination protease (372 aa).

The propeptide occupies M1–D15.

This sequence belongs to the peptidase A25 family. As to quaternary structure, homotetramer. Autoproteolytically processed. The inactive tetrameric zymogen termed p46 autoprocesses to a smaller form termed p41, which is active only during spore germination.

The catalysed reaction is Endopeptidase action with P4 Glu or Asp, P1 preferably Glu &gt; Asp, P1' hydrophobic and P2' Ala.. Functionally, initiates the rapid degradation of small, acid-soluble proteins during spore germination. This chain is Germination protease, found in Halalkalibacterium halodurans (strain ATCC BAA-125 / DSM 18197 / FERM 7344 / JCM 9153 / C-125) (Bacillus halodurans).